Consider the following 579-residue polypeptide: Membrane frizzled-related protein (579 aa).

The Cytoplasmic segment spans residues 1–69 (MKDFSDVILC…RPDCRFSWLC (69 aa)). Residues 70–90 (VLLLSSLLLLLLGLLVAIILA) traverse the membrane as a helical; Signal-anchor for type II membrane protein segment. At 91–579 (QLQAAPPSGA…AADLEACAQP (489 aa)) the chain is on the extracellular side. The tract at residues 100–143 (ASHSPLPAGGLTTTTTTPTITTSQAAGTPKGQQESGVSPSPQST) is disordered. The span at 111 to 121 (TTTTTTPTITT) shows a compositional bias: low complexity. Residues 122–143 (SQAAGTPKGQQESGVSPSPQST) show a composition bias toward polar residues. Cystine bridges form between Cys-144-Cys-170 and Cys-197-Cys-216. The CUB 1 domain maps to 144–253 (CGGLLSGPRG…FGFHAWYQAM (110 aa)). Residue Asn-227 is glycosylated (N-linked (GlcNAc...) asparagine). An LDL-receptor class A 1 domain is found at 259 to 295 (SCAHDEFRCDQLICLLPDSVCDGFANCADGSDETNCS). 5 disulfides stabilise this stretch: Cys-260/Cys-272, Cys-267/Cys-285, Cys-279/Cys-294, Cys-301/Cys-327, and Cys-354/Cys-377. Residues 301–414 (CGGNLTGLQG…GGFSATYLAF (114 aa)) enclose the CUB 2 domain. The N-linked (GlcNAc...) asparagine glycan is linked to Asn-415. The LDL-receptor class A 2 domain occupies 420–455 (PCGPSELSCQAGGCKGVQWMCDMWRDCTDGSDDNCS). Cystine bridges form between Cys-421–Cys-433, Cys-428–Cys-446, Cys-440–Cys-454, Cys-466–Cys-528, Cys-474–Cys-521, Cys-512–Cys-549, Cys-538–Cys-576, and Cys-542–Cys-564. Positions 461–579 (PPELACEPVQ…AADLEACAQP (119 aa)) constitute an FZ domain.

Interacts with C1QTNF5. Specifically expressed in brain. Strongly expressed in medulla oblongata and to a lower extent in hippocampus and corpus callosum. Expressed in keratinocytes.

The protein resides in the apical cell membrane. Functionally, may play a role in eye development. The sequence is that of Membrane frizzled-related protein (MFRP) from Homo sapiens (Human).